A 446-amino-acid chain; its full sequence is Long-chain fatty acid transport protein (446 aa).

The N-terminal stretch at 1–25 (MSQKTLFTKSALAVAVALISTQAWS) is a signal peptide.

Belongs to the OmpP1/FadL family. Has been isolated from outer membrane preparation as a homodimer.

It is found in the cell outer membrane. Involved in translocation of long-chain fatty acids across the outer membrane. It is a receptor for the bacteriophage T2. FadL may form a specific channel. The sequence is that of Long-chain fatty acid transport protein (fadL) from Escherichia coli (strain K12).